A 371-amino-acid chain; its full sequence is tRNA-specific 2-thiouridylase MnmA (371 aa).

Residues 24–31 (AMSGGVDS) and Leu-50 each bind ATP. The active-site Nucleophile is the Cys-120. A disulfide bridge connects residues Cys-120 and Cys-216. Residue Gly-144 coordinates ATP. The segment at 166–168 (KDQ) is interaction with tRNA. The active-site Cysteine persulfide intermediate is the Cys-216.

Belongs to the MnmA/TRMU family.

Its subcellular location is the cytoplasm. It catalyses the reaction S-sulfanyl-L-cysteinyl-[protein] + uridine(34) in tRNA + AH2 + ATP = 2-thiouridine(34) in tRNA + L-cysteinyl-[protein] + A + AMP + diphosphate + H(+). Functionally, catalyzes the 2-thiolation of uridine at the wobble position (U34) of tRNA, leading to the formation of s(2)U34. The protein is tRNA-specific 2-thiouridylase MnmA of Wolbachia sp. subsp. Brugia malayi (strain TRS).